Reading from the N-terminus, the 77-residue chain is Apelin (77 aa).

The signal sequence occupies residues methionine 1–alanine 22. The segment at serine 21–phenylalanine 77 is disordered. The span at glycine 59–histidine 71 shows a compositional bias: basic residues.

It belongs to the apelin family.

The protein resides in the secreted. It localises to the extracellular space. Its function is as follows. Peptide hormone that functions as endogenous ligand for the G-protein-coupled apelin receptor (aplnra and/or aplnrb), that plays a role in cadiovascular homeostasis. Functions as a balanced agonist activating both G(i) protein pathway and beta-arrestin pathway of APLNR. Downstream G proteins activation, apelin can inhibit cAMP production and activate key intracellular effectors such as ERKs. On the other hand, APLNR activation induces beta-arrestin recruitment to the membrane leading to desensitization and internalization of the receptor. Apelin blunts cardiac hypertrophic induction from APLNR on response to pathological stimuli, but also induces myocardial hypertrophy under normal conditions. Involved in the regulation of cardiac precursor cell movements during gastrulation and heart morphogenesis. Plays a role in early coronary blood vessels formation. Mediates myocardial contractility in an ERK1/2-dependent manner. May also have a role in the central control of body fluid homeostasis. The sequence is that of Apelin from Danio rerio (Zebrafish).